A 439-amino-acid polypeptide reads, in one-letter code: Argininosuccinate lyase (439 aa).

The protein belongs to the lyase 1 family. Argininosuccinate lyase subfamily.

It is found in the cytoplasm. The catalysed reaction is 2-(N(omega)-L-arginino)succinate = fumarate + L-arginine. The protein operates within amino-acid biosynthesis; L-arginine biosynthesis; L-arginine from L-ornithine and carbamoyl phosphate: step 3/3. This chain is Argininosuccinate lyase, found in Caldanaerobacter subterraneus subsp. tengcongensis (strain DSM 15242 / JCM 11007 / NBRC 100824 / MB4) (Thermoanaerobacter tengcongensis).